Here is a 103-residue protein sequence, read N- to C-terminus: Small ribosomal subunit protein uS10c (103 aa).

It belongs to the universal ribosomal protein uS10 family. In terms of assembly, part of the 30S ribosomal subunit.

The protein localises to the plastid. The protein resides in the chloroplast. Involved in the binding of tRNA to the ribosomes. The sequence is that of Small ribosomal subunit protein uS10c from Emiliania huxleyi (Coccolithophore).